The chain runs to 257 residues: Imidazole glycerol phosphate synthase subunit HisF (257 aa).

Catalysis depends on residues aspartate 11 and aspartate 130.

This sequence belongs to the HisA/HisF family. In terms of assembly, heterodimer of HisH and HisF.

Its subcellular location is the cytoplasm. It catalyses the reaction 5-[(5-phospho-1-deoxy-D-ribulos-1-ylimino)methylamino]-1-(5-phospho-beta-D-ribosyl)imidazole-4-carboxamide + L-glutamine = D-erythro-1-(imidazol-4-yl)glycerol 3-phosphate + 5-amino-1-(5-phospho-beta-D-ribosyl)imidazole-4-carboxamide + L-glutamate + H(+). It participates in amino-acid biosynthesis; L-histidine biosynthesis; L-histidine from 5-phospho-alpha-D-ribose 1-diphosphate: step 5/9. Functionally, IGPS catalyzes the conversion of PRFAR and glutamine to IGP, AICAR and glutamate. The HisF subunit catalyzes the cyclization activity that produces IGP and AICAR from PRFAR using the ammonia provided by the HisH subunit. The protein is Imidazole glycerol phosphate synthase subunit HisF of Trichormus variabilis (strain ATCC 29413 / PCC 7937) (Anabaena variabilis).